Reading from the N-terminus, the 305-residue chain is Acetaldehyde dehydrogenase (305 aa).

13–16 (SGNI) lines the NAD(+) pocket. Residue Cys128 is the Acyl-thioester intermediate of the active site. Residues 159-167 (SAGPGTRQN) and Asn278 contribute to the NAD(+) site.

It belongs to the acetaldehyde dehydrogenase family.

The enzyme catalyses acetaldehyde + NAD(+) + CoA = acetyl-CoA + NADH + H(+). This chain is Acetaldehyde dehydrogenase, found in Roseiflexus castenholzii (strain DSM 13941 / HLO8).